The following is a 152-amino-acid chain: SsrA-binding protein (152 aa).

Belongs to the SmpB family.

It is found in the cytoplasm. Functionally, required for rescue of stalled ribosomes mediated by trans-translation. Binds to transfer-messenger RNA (tmRNA), required for stable association of tmRNA with ribosomes. tmRNA and SmpB together mimic tRNA shape, replacing the anticodon stem-loop with SmpB. tmRNA is encoded by the ssrA gene; the 2 termini fold to resemble tRNA(Ala) and it encodes a 'tag peptide', a short internal open reading frame. During trans-translation Ala-aminoacylated tmRNA acts like a tRNA, entering the A-site of stalled ribosomes, displacing the stalled mRNA. The ribosome then switches to translate the ORF on the tmRNA; the nascent peptide is terminated with the 'tag peptide' encoded by the tmRNA and targeted for degradation. The ribosome is freed to recommence translation, which seems to be the essential function of trans-translation. The sequence is that of SsrA-binding protein from Rickettsia akari (strain Hartford).